The following is a 606-amino-acid chain: Elongation factor 4 (606 aa).

Residues 7-189 (SRIRNFCIIA…AVVDRVPPPK (183 aa)) form the tr-type G domain. GTP is bound by residues 19–24 (DHGKST) and 136–139 (NKID).

The protein belongs to the TRAFAC class translation factor GTPase superfamily. Classic translation factor GTPase family. LepA subfamily.

Its subcellular location is the cell inner membrane. The catalysed reaction is GTP + H2O = GDP + phosphate + H(+). Its function is as follows. Required for accurate and efficient protein synthesis under certain stress conditions. May act as a fidelity factor of the translation reaction, by catalyzing a one-codon backward translocation of tRNAs on improperly translocated ribosomes. Back-translocation proceeds from a post-translocation (POST) complex to a pre-translocation (PRE) complex, thus giving elongation factor G a second chance to translocate the tRNAs correctly. Binds to ribosomes in a GTP-dependent manner. This chain is Elongation factor 4, found in Parasynechococcus marenigrum (strain WH8102).